Reading from the N-terminus, the 297-residue chain is Phosphatidylserine decarboxylase proenzyme (297 aa).

Active-site charge relay system; for autoendoproteolytic cleavage activity residues include Asp-90, His-147, and Ser-252. Residue Ser-252 is the Schiff-base intermediate with substrate; via pyruvic acid; for decarboxylase activity of the active site. The residue at position 252 (Ser-252) is a Pyruvic acid (Ser); by autocatalysis.

The protein belongs to the phosphatidylserine decarboxylase family. PSD-B subfamily. Prokaryotic type I sub-subfamily. In terms of assembly, heterodimer of a large membrane-associated beta subunit and a small pyruvoyl-containing alpha subunit. Requires pyruvate as cofactor. Is synthesized initially as an inactive proenzyme. Formation of the active enzyme involves a self-maturation process in which the active site pyruvoyl group is generated from an internal serine residue via an autocatalytic post-translational modification. Two non-identical subunits are generated from the proenzyme in this reaction, and the pyruvate is formed at the N-terminus of the alpha chain, which is derived from the carboxyl end of the proenzyme. The autoendoproteolytic cleavage occurs by a canonical serine protease mechanism, in which the side chain hydroxyl group of the serine supplies its oxygen atom to form the C-terminus of the beta chain, while the remainder of the serine residue undergoes an oxidative deamination to produce ammonia and the pyruvoyl prosthetic group on the alpha chain. During this reaction, the Ser that is part of the protease active site of the proenzyme becomes the pyruvoyl prosthetic group, which constitutes an essential element of the active site of the mature decarboxylase.

Its subcellular location is the cell membrane. It catalyses the reaction a 1,2-diacyl-sn-glycero-3-phospho-L-serine + H(+) = a 1,2-diacyl-sn-glycero-3-phosphoethanolamine + CO2. The protein operates within phospholipid metabolism; phosphatidylethanolamine biosynthesis; phosphatidylethanolamine from CDP-diacylglycerol: step 2/2. Its function is as follows. Catalyzes the formation of phosphatidylethanolamine (PtdEtn) from phosphatidylserine (PtdSer). The chain is Phosphatidylserine decarboxylase proenzyme from Stutzerimonas stutzeri (strain A1501) (Pseudomonas stutzeri).